We begin with the raw amino-acid sequence, 230 residues long: Acyl-protein thioesterase 1 (230 aa).

Catalysis depends on charge relay system residues Ser-119, Asp-174, and His-208. At Lys-224 the chain carries N6-acetyllysine.

This sequence belongs to the AB hydrolase superfamily. AB hydrolase 2 family. As to quaternary structure, homodimer. In terms of tissue distribution, platelets.

The protein localises to the cytoplasm. It localises to the cell membrane. The protein resides in the nucleus membrane. It is found in the endoplasmic reticulum. It carries out the reaction S-hexadecanoyl-L-cysteinyl-[protein] + H2O = L-cysteinyl-[protein] + hexadecanoate + H(+). The catalysed reaction is 1-hexadecanoyl-sn-glycero-3-phosphocholine + H2O = sn-glycerol 3-phosphocholine + hexadecanoate + H(+). The enzyme catalyses a 1-(9Z-octadecenoyl)-2-acyl-sn-glycero-3-phosphocholine + H2O = a 2-acyl-sn-glycero-3-phosphocholine + (9Z)-octadecenoate + H(+). Inhibited by palmostatin-B, leading to impair depalmitoylating of Ras. In terms of biological role, acts as an acyl-protein thioesterase. Hydrolyzes fatty acids from S-acylated cysteine residues in proteins such as trimeric G alpha proteins or HRAS. Acts as a palmitoyl thioesterase that catalyzes depalmitoylation of proteins, such as ADRB2, KCNMA1 and SQSTM1. Acts as a negative regulator of autophagy by mediating palmitoylation of SQSTM1, decreasing affinity between SQSTM1 and ATG8 proteins and recruitment of ubiquitinated cargo proteins to autophagosomes. Acts as a lysophospholipase and hydrolyzes lysophosphatidylcholine (lyso-PC). Also hydrolyzes lysophosphatidylethanolamine (lyso-PE), lysophosphatidylinositol (lyso-PI) and lysophosphatidylserine (lyso-PS). Has much higher thioesterase activity than lysophospholipase activity. Contributes to the production of lysophosphatidic acid (LPA) during blood coagulation by recognizing and cleaving plasma phospholipids to generate lysophospholipids which in turn act as substrates for ENPP2 to produce LPA. The polypeptide is Acyl-protein thioesterase 1 (LYPLA1) (Homo sapiens (Human)).